The chain runs to 554 residues: Bifunctional epoxide hydrolase 2 (554 aa).

The phosphatase stretch occupies residues 1-224 (MALRVAAFDL…KVTGTQFPEA (224 aa)). Mg(2+) is bound by residues D9 and D11. K55 is subject to N6-succinyllysine. 123-124 (TN) contacts phosphate. Position 176 is an N6-acetyllysine; alternate (K176). The residue at position 176 (K176) is an N6-succinyllysine; alternate. Residue D185 participates in Mg(2+) binding. N6-acetyllysine occurs at positions 191 and 215. The epoxide hydrolase stretch occupies residues 233-554 (NDVSHGYVTV…VQNPSVTSKI (322 aa)). The AB hydrolase-1 domain occupies 257–530 (PALCLCHGFP…CGHWTQIEKP (274 aa)). D333 acts as the Nucleophile in catalysis. At S368 the chain carries Phosphoserine. K371 is subject to N6-succinyllysine. Y381 serves as a coordination point for substrate. 2 positions are modified to N6-succinyllysine: K420 and K454. Residue Y465 is the Proton donor of the active site. K504 is subject to N6-succinyllysine. K508 carries the post-translational modification N6-acetyllysine; alternate. Position 508 is an N6-succinyllysine; alternate (K508). A lipid anchor (S-(15-deoxy-Delta12,14-prostaglandin J2-9-yl)cysteine) is attached at C521. The Proton acceptor role is filled by H523. Positions 552-554 (SKI) match the Microbody targeting signal motif. K553 carries the N6-succinyllysine modification.

The protein belongs to the AB hydrolase superfamily. Epoxide hydrolase family. Homodimer. The cofactor is Mg(2+). Post-translationally, the N-terminus is blocked. In terms of processing, the covalent modification of cysteine by 15-deoxy-Delta12,14-prostaglandin-J2 is autocatalytic and reversible. It may occur as an alternative to other cysteine modifications, such as S-nitrosylation and S-palmitoylation. In terms of tissue distribution, detected in liver, intestine, ovary and kidney. Detected at low levels in heart and muscle.

The protein resides in the cytoplasm. The protein localises to the peroxisome. The catalysed reaction is an epoxide + H2O = an ethanediol. The enzyme catalyses (9S,10S)-10-hydroxy-9-(phosphooxy)octadecanoate + H2O = (9S,10S)-9,10-dihydroxyoctadecanoate + phosphate. It catalyses the reaction 8-hydroxy-(11S,12S)-epoxy-(5Z,9E,14Z)-eicosatrienoate + H2O = (8,11R,12S)-trihydroxy-(5Z,9E,14Z)-eicosatrienoate. It carries out the reaction 10-hydroxy-(11S,12S)-epoxy- (5Z,8Z,14Z)-eicosatrienoate + H2O = (10,11S,12R)-trihydroxy-(5Z,8Z,14Z)-eicosatrienoate. The catalysed reaction is (8S,9R)-epoxy-(5Z,11Z,14Z)-eicosatrienoate + H2O = (8S,9S)-dihydroxy-(5Z,11Z,14Z)-eicosatrienoate. The enzyme catalyses (11S,12R)-epoxy-(5Z,8Z,14Z)-eicosatrienoate + H2O = (11R,12R)-dihydroxy-(5Z,8Z,14Z)-eicosatrienoate. It catalyses the reaction (11S,12R)-epoxy-(5Z,8Z,14Z)-eicosatrienoate + H2O = (11S,12S)-dihydroxy-(5Z,8Z,14Z)-eicosatrienoate. It carries out the reaction (14S,15R)-epoxy-(5Z,8Z,11Z)-eicosatrienoate + H2O = (14R,15R)-dihydroxy-(5Z,8Z,11Z)-eicosatrienoate. The catalysed reaction is (14S,15R)-epoxy-(5Z,8Z,11Z)-eicosatrienoate + H2O = (14S,15S)-dihydroxy-(5Z,8Z,11Z)-eicosatrienoate. The enzyme catalyses (11R,12S)-epoxy-(5Z,8Z,14Z)-eicosatrienoate + H2O = (11S,12S)-dihydroxy-(5Z,8Z,14Z)-eicosatrienoate. It catalyses the reaction (11R,12S)-epoxy-(5Z,8Z,14Z)-eicosatrienoate + H2O = (11R,12R)-dihydroxy-(5Z,8Z,14Z)-eicosatrienoate. It carries out the reaction (8S,9R)-epoxy-(5Z,11Z,14Z)-eicosatrienoate + H2O = (8R,9R)-dihydroxy-(5Z,11Z,14Z)-eicosatrienoate. The catalysed reaction is 12-phosphooxy-(9Z)-octadecenoate + H2O = 12-hydroxy-(9Z)-octadecenoate + phosphate. The enzyme catalyses 12-phosphooxy-(9E)-octadecenoate + H2O = 12-hydroxy-(9E)-octadecenoate + phosphate. It catalyses the reaction 12-(phosphooxy)octadecanoate + H2O = 12-hydroxyoctadecanoate + phosphate. It carries out the reaction 8,9-epoxy-(5Z,11Z,14Z)-eicosatrienoate + H2O = 8,9-dihydroxy-(5Z,11Z,14Z)-eicosatrienoate. The catalysed reaction is 11,12-epoxy-(5Z,8Z,14Z)-eicosatrienoate + H2O = 11,12-dihydroxy-(5Z,8Z,14Z)-eicosatrienoate. The enzyme catalyses 14,15-epoxy-(5Z,8Z,11Z)-eicosatrienoate + H2O = 14,15-dihydroxy-(5Z,8Z,11Z)-eicosatrienoate. It catalyses the reaction 9,10-epoxy-(12Z)-octadecenoate + H2O = 9,10-dihydroxy-(12Z)-octadecenoate. It carries out the reaction 1-tetradecanoyl-sn-glycerol 3-phosphate + H2O = 1-tetradecanoyl-sn-glycerol + phosphate. The catalysed reaction is 1-octadecanoyl-sn-glycero-3-phosphate + H2O = 1-octadecanoyl-sn-glycerol + phosphate. The enzyme catalyses 1-(5Z,8Z,11Z,14Z-eicosatetraenoyl)-sn-glycero-3-phosphate + H2O = 1-(5Z,8Z,11Z,14Z-eicosatetraenoyl)-sn-glycerol + phosphate. It catalyses the reaction 1-hexadecanoyl-sn-glycero-3-phosphate + H2O = 1-hexadecanoyl-sn-glycerol + phosphate. It carries out the reaction 1-(9Z-octadecenoyl)-sn-glycero-3-phosphate + H2O = 1-(9Z-octadecenoyl)-sn-glycerol + phosphate. The catalysed reaction is (14R,15S)-epoxy-(5Z,8Z,11Z)-eicosatrienoate + H2O = (14R,15R)-dihydroxy-(5Z,8Z,11Z)-eicosatrienoate. Inhibited by 1-(1-acetylpiperidin-4-yl)-3-(4-(trifl uoromethoxy)phenyl)urea (TPAU), 1-cyclohexyl-3-dodecylurea (CDU), 12-(3-adamantan-1-yl-ureido)-dodecanoic acid (AUDA), 1-((3S, 5S, 7S)-adamantan-1-yl)-3-(5-(2-(2-ethoxyethoxy) ethoxy)pentyl)urea (AEPU), N-adamantyl-N[']-cyclohexyl urea (ACU), 4-(((1S, 4S)-4-(3-((3S, 5S, 7S)-adamantan-1-yl) ureido)cyclohexyl)oxy)benzoic acid (c-AUCB), 4-(((1R, 4R)-4-(3-((3S, 5S, 7S)-adamantan-1-yl)ureido)cyclohexyl)oxy)benzoic acid (t-AUCB), 4-(((1R, 4R)-4-(3-(4(trifluoromethoxy)phenyl)ureido)cyclohexyl)oxy)benzoic acid (t-TAUCB) and to a lesser extent by 8-(3-((3S, 5S, 7S)-adamantan-1-yl)ureido) octanoic acid (AUOA). Phosphatase activity is inhibited by dodecyl-phosphate, phospholipids such as phospho-lysophosphatidic acids and fatty acids such as palmitic acid and lauric acid. In terms of biological role, bifunctional enzyme. The C-terminal domain has epoxide hydrolase activity and acts on epoxides (alkene oxides, oxiranes) and arene oxides. Plays a role in xenobiotic metabolism by degrading potentially toxic epoxides. Also determines steady-state levels of physiological mediators. Its function is as follows. Bifunctional enzyme. The N-terminal domain has lipid phosphatase activity, with the highest activity towards threo-9,10-phosphonooxy-hydroxy-octadecanoic acid, followed by erythro-9,10-phosphonooxy-hydroxy-octadecanoic acid, 12-phosphonooxy-octadec-9Z-enoic acid and 12-phosphonooxy-octadec-9E-enoic acid. Has phosphatase activity toward lyso-glycerophospholipids with also some lower activity toward lysolipids of sphingolipid and isoprenoid phosphates. The polypeptide is Bifunctional epoxide hydrolase 2 (Mus musculus (Mouse)).